The primary structure comprises 137 residues: uncharacterized protein (137 aa).

The disordered stretch occupies residues proline 31–isoleucine 83.

This is an uncharacterized protein from Homo sapiens (Human).